The following is a 180-amino-acid chain: Crossover junction endodeoxyribonuclease RuvC (180 aa).

Residues Asp-7, Glu-66, and Asp-138 contribute to the active site. Mg(2+) contacts are provided by Asp-7, Glu-66, and Asp-138.

Belongs to the RuvC family. In terms of assembly, homodimer which binds Holliday junction (HJ) DNA. The HJ becomes 2-fold symmetrical on binding to RuvC with unstacked arms; it has a different conformation from HJ DNA in complex with RuvA. In the full resolvosome a probable DNA-RuvA(4)-RuvB(12)-RuvC(2) complex forms which resolves the HJ. Requires Mg(2+) as cofactor.

Its subcellular location is the cytoplasm. The enzyme catalyses Endonucleolytic cleavage at a junction such as a reciprocal single-stranded crossover between two homologous DNA duplexes (Holliday junction).. Functionally, the RuvA-RuvB-RuvC complex processes Holliday junction (HJ) DNA during genetic recombination and DNA repair. Endonuclease that resolves HJ intermediates. Cleaves cruciform DNA by making single-stranded nicks across the HJ at symmetrical positions within the homologous arms, yielding a 5'-phosphate and a 3'-hydroxyl group; requires a central core of homology in the junction. The consensus cleavage sequence is 5'-(A/T)TT(C/G)-3'. Cleavage occurs on the 3'-side of the TT dinucleotide at the point of strand exchange. HJ branch migration catalyzed by RuvA-RuvB allows RuvC to scan DNA until it finds its consensus sequence, where it cleaves and resolves the cruciform DNA. The polypeptide is Crossover junction endodeoxyribonuclease RuvC (Burkholderia vietnamiensis (strain G4 / LMG 22486) (Burkholderia cepacia (strain R1808))).